Consider the following 147-residue polypeptide: Small ribosomal subunit protein uS13 (147 aa).

Residues Ser115–Ser147 are disordered. The span at Thr132–Ser147 shows a compositional bias: polar residues.

It belongs to the universal ribosomal protein uS13 family. Part of the 30S ribosomal subunit. Forms a loose heterodimer with protein S19. Forms two bridges to the 50S subunit in the 70S ribosome.

Its function is as follows. Located at the top of the head of the 30S subunit, it contacts several helices of the 16S rRNA. In the 70S ribosome it contacts the 23S rRNA (bridge B1a) and protein L5 of the 50S subunit (bridge B1b), connecting the 2 subunits; these bridges are implicated in subunit movement. The protein is Small ribosomal subunit protein uS13 of Methanobrevibacter smithii (strain ATCC 35061 / DSM 861 / OCM 144 / PS).